The primary structure comprises 205 residues: Thymidine kinase (205 aa).

ATP is bound by residues 9–16 (SAMNAGKS) and 87–90 (DECQ). Residue glutamate 88 is the Proton acceptor of the active site. Positions 145, 147, 182, and 185 each coordinate Zn(2+).

This sequence belongs to the thymidine kinase family. In terms of assembly, homotetramer.

It localises to the cytoplasm. The enzyme catalyses thymidine + ATP = dTMP + ADP + H(+). This is Thymidine kinase from Shigella dysenteriae serotype 1 (strain Sd197).